Here is a 114-residue protein sequence, read N- to C-terminus: Cytochrome c oxidase subunit 7A2-like, mitochondrial (114 aa).

The transit peptide at 1-55 directs the protein to the mitochondrion; that stretch reads MYYKFSGFTQKLAGAWASEAYSPQGLKPVVSTEAPPIIFATPTKLTSDSTVYDYA. Lys69 bears the N6-acetyllysine mark. The chain crosses the membrane as a helical span at residues 82 to 107; sequence PDQMLYRTTMALTVGGTIYCLIALYM.

Belongs to the cytochrome c oxidase VIIa family. As to quaternary structure, interacts with the mitochondrial respiratory complexes III (CIII) and IV (CIV), promoting their association.

Its subcellular location is the mitochondrion inner membrane. Its function is as follows. Assembly factor that mediates the formation of some mitochondrial respiratory supercomplexes (respirasomes), thereby promoting oxidative phosphorylation and energy metabolism. Acts as a molecular adapter that associates with both mitochondrial respiratory complexes III (CIII) and IV (CIV), promoting their association. Mediates the formation of various mitochondrial respiratory supercomplexes, such as MCIII(2)IV(2), composed of two CIII and two CIV, and the CS-respirasome (MCI(1)III(2)IV(2)), composed of one CI, two CIII and two CIV. Not involved in the formation of the canonical respirasome (MCI(1)III(2)IV(1)), composed of one CI, two CIII and one CIV. The formation of different respirasomes is important for cell adaptation to oxygen conditions and prevent metabolic exhaustion: supercomplexes mediated by COX7A2L/SCAF1 are required to maintain oxidative phosphorylation upon low oxygen conditions and promote metabolic rewiring toward glycolysis. The chain is Cytochrome c oxidase subunit 7A2-like, mitochondrial from Homo sapiens (Human).